The following is a 2729-amino-acid chain: MQGNHDGSWSLHPSTNNGSGRANGNININTVPGGGYLPQANPVFPNFNQPIRYPIPQFPANFYRPNFPDFSLGNPNFQPHQNLNFLHQQIPHQYGSAANHFLQNHNQNSFSFPPQSIPNNDISISQNHGAFENSSLKRRRQEEVVQVTDVVPKSNFASGESANNSFSVSLPIPIATDDSGVSRVHGEKSSGKPKRKVDVLRIDKAVNKTRKLFVAAGESVSSTRVSRAVLEELQADSWRSLGVQMQDVPSLRQLMAIEGKINAFIHCFVGARRIVTLHDLEVAICRNEFVDSFDDLELGPLLQHPLVLLYFPSISSSTGPVKITSEEIISFLDSYLHTYMTEDVKLDEFLNFVASQKSVTSKEKLGVRIQSLRMYVSFILDAKRQEGETLKVLLTELHQKYHIPSSKKQQRDKSLTVSERADSFALHHKDYCGKHIRFDSSSSDENDNVYEVRNLNSSDHINSCPYPSVAEEMKRLGGSNKKRKGERRNHEKSDSSKLLRKSPSKLQGHAKQEIPKLADDSEAKKVFSVDEADFTLSEGDLRLFISTWKDTCKELSISTFVEKMLSFYNLGGSEGRAQIKRAKAMSSFPFVGLLNVAVTSLRRGMWDSIYDNFQMTSLSDTTNTGSGNQVGEINPIENSELSKTQHVMPPTHCNTVEEIIRRLSLYFEHDLSGAKHIGIFRKLQTCENLLAEQFQVQDFESLGWGGFFAFLEKHMLLLPTQLQRFLSRELQEEFPLEVHVNENLLTLLLSQASEFSSDKVLSRQTLARLVAEQFPSISFKVVGRDSEENFSEIIGKKKSSSKCVLFSATLLGAENSLTSKYLEESLTVGNDTEARSTTLNAVASKEVLDVLLRVPLLSDLNSWCHWDLRYAPQFGPLMGCLNEINSTDLLCLVTRDGKIIRADPSATADSFLEAALQGSAYRTAAQLLSLISLNGRTHLPFSLLKCYAKRAFEVFFYNYSEEMELNDRNSLVQMHGPEKLSTSFDKVIVVGEKAKVAKRDYAASKFLLDCLGYLPGEFRSLVVDILLPGLRSVVKDAPTRVLSACEQTEQRIMLHDAGLLLGIVEWISDYHKFCSSCSPNSSIVENASSNLDSGAGFVQNELEDPVQTKQRCMIVSEKSCEYKEEPHESCHTFGGSGILCDSVGEAFTQTAPEFYDNRASVIDSIRRDEFGLDLTSSGSEMSMLQKQHARLGRALQCLSQELYSQDSHFILELVQNADDNKYPEHVEPTLTFILQKTGIVVLNNECGFMPENIRALCDVGQSTKKGSGGYIGKKGIGFKSVFRVSDAPEIHSNGFHFKFDISEGQIGYILPTVVPPHDIESLSSMLSGRALHLKDAGWNTCITLPFRAIDSERTTVNHIEPMFSDLHPSLLLFLHRLQCIVYRNVLDDSLLVMRKEVVSKNIVKVSCGENSMTWFVASEKLKATNLRDDVQTTEISIGFTLDMLEDGTYRSCMIQEPVFAFLPLRTYGLKFIIQGDFILTSSREDVDEDSPWNQWLLSEFPGLFVDALRSFCSLPSFTQNLGKGVSSYMQLVPLVGEVHGFFSSLPRSIISRLRTTNCLLLEGDGEEWVPPCKVLRNWNEKIRVLLKDGLLQEHLALGFLDKDIVLSDSLSRALGIEDYGPKTLVQILSSLSHKNGCLQSMGFTWLSSILTELYLLFRSSGHGNVELGIDKSLIDDLHKIPFIPLSNGKFTSLDEGAVWLHHDTTGLDLGDVFEAFPVLYGNLRTIDHSLLLASSVDEKSSVDDLVNMLCAIGVQKLSAHEIVKAHILPAFEARSTGAVDGLMVDYLCFVMTHLRSGCHICLKERKYIISELRSKALVLSNYGLKQLGEGSIHFGEEYGNQVNMKKLTKNLDISWHVVDGTYLKHPASKFYACGLKEWREFFQEIGIADFVQVVQVEKSIAEFYSVSHCEKYDINLLSPDLTVKDWESPELVDLLSLLHKSNGRKGCKYLLEVLDRLWDDCYYDKTTVNYNSGTHGIIRSSESSFMRVICDSLWIVSSMDSKLHLSKDLYHDCDDVQSILGMNAPYAVPTVTSVKLLSDIGFKTKVSLDDALEVLESWVHCGDSFKSSISQITRFYKYLWNEMADSKQKITEKLHTLPSVFVPHGIASRQNDMISGIFLSLDDVYWNDSAGVLDEIKEISSQISSVVEPLRRKTLGNIYPGLHDFFVNGCGVPETPSFQEYLKILGQFAHNVSPSSAAKAVFKIFLKWSDDLNSGKSSEDVIHFKERLSELEYTVLPTENDKWVSLHSSFGLVCWCDNEKLKKRFKNKDKIEFISFGENDDEGQEVLQTKVSGLMHSLGIPSISEVVKREAKYEGLQDNTVTVSLVNWALPYAQRYIFTLHHEKYTQTKKTVHSQVKRLQVFVVDKLSYRNVIPQYGISSKKEFKCSSLLQDKALYTTPSLDSHSLFMELSRLFFNGVPDLHLANFLHLIKTMAESGLSEEQMESFILNSQKVHQVPDGEEIWSLKSAVKAKKKAGISLSWLPSSSKTRHGSSKTNTDDSKQELDTSSSKEDVTEALEEKIPIEMTNTNLVSGYDNCAGTSSRASEPNPLHSMHMISGSTSGNQAAMHLNPNLPHEWNNSFTANFSDRDQLHTGTPWAAQAQQTGRKGEEIAYRYFVAKYGNEALVKWVNDQSETGLPYDLMIENRGGKKEYVEVKATVSTRKDYFNLTVREWQFANEKGESYIIAHVLLGNSNAILTQHRNPVKLCQEGHLRLLVLMPNQRNEVNVTF.

The segment at 1-27 is disordered; sequence MQGNHDGSWSLHPSTNNGSGRANGNIN. Short sequence motifs (nuclear localization signal) lie at residues 194–201 and 473–480; these read KRKVDVLR and MKRLGGSN. Disordered regions lie at residues 477 to 517 and 2482 to 2515; these read GGSN…IPKL and LPSSSKTRHGSSKTNTDDSKQELDTSSSKEDVTE. 2 stretches are compositionally biased toward basic and acidic residues: residues 488–497 and 2496–2515; these read RNHEKSDSSK and NTDDSKQELDTSSSKEDVTE.

In terms of tissue distribution, specifically expressed in developing embryos, leaf primordia, and shoot and root apical meristems.

It localises to the nucleus. Functionally, essential protein required for cell fate determination during embryogenesis. Mediates auxin-dependent coordinated cell-fate specification and patterning in embryos (e.g. cotyledon outgrowth and separation), shoots and roots (e.g. leaf vascular development, cellular patterning and stem cell maintenance in the meristems). Required for provascular PIN1 expression and region-specific expression of PIN7 in leaf primordia, cell type-specific expression of PIN3, PIN4, and PIN7 in the root, and PIN2 polarity in the root cortex. The protein is Protein NO VEIN of Arabidopsis thaliana (Mouse-ear cress).